The following is a 180-amino-acid chain: Nucleoside-triphosphatase THEP1 (180 aa).

Residues 8–15 (GPVGSIKA) and 100–107 (VIIIDELG) each bind ATP.

It belongs to the THEP1 NTPase family.

It catalyses the reaction a ribonucleoside 5'-triphosphate + H2O = a ribonucleoside 5'-diphosphate + phosphate + H(+). Has nucleotide phosphatase activity towards ATP, GTP, CTP, TTP and UTP. May hydrolyze nucleoside diphosphates with lower efficiency. This chain is Nucleoside-triphosphatase THEP1, found in Picrophilus torridus (strain ATCC 700027 / DSM 9790 / JCM 10055 / NBRC 100828 / KAW 2/3).